A 130-amino-acid chain; its full sequence is MVLMDPLANALSVIKNAETTGKTDCVIDPASKIIGNVLKVMQDQGYVGEFEFVDNGKAGQLKVKLIGKINKCGVVKPRFAVGKTEMEKWEKRYLPARNFGTLILTTSKGVMSHYDAAKMGIGGEILAYVY.

This sequence belongs to the universal ribosomal protein uS8 family. Part of the 30S ribosomal subunit.

One of the primary rRNA binding proteins, it binds directly to 16S rRNA central domain where it helps coordinate assembly of the platform of the 30S subunit. This chain is Small ribosomal subunit protein uS8, found in Methanocella arvoryzae (strain DSM 22066 / NBRC 105507 / MRE50).